The following is a 256-amino-acid chain: H-2 class II histocompatibility antigen, A-D alpha chain (256 aa).

The first 23 residues, 1 to 23 (MPCSRALILGVLALNTMLSLCGG), serve as a signal peptide directing secretion. The alpha-1 stretch occupies residues 24–111 (EDDIEADHVG…KRSNFTPATN (88 aa)). Residues 24–218 (EDDIEADHVG…IPAPMSELTE (195 aa)) lie on the Extracellular side of the membrane. An alpha-2 region spans residues 112 to 205 (EAPQATVFPK…GLEEPVLKHW (94 aa)). Residues 114 to 206 (PQATVFPKSP…LEEPVLKHWE (93 aa)) form the Ig-like C1-type domain. Cys-134 and Cys-190 form a disulfide bridge. Asn-145 is a glycosylation site (N-linked (GlcNAc...) asparagine). The connecting peptide stretch occupies residues 206–218 (EPEIPAPMSELTE). A helical membrane pass occupies residues 219 to 244 (TVVCALGLSVGLVGIVVGTIFIIQGL). Residues 245 to 256 (RSGGTSRHPGPL) are Cytoplasmic-facing.

The protein belongs to the MHC class II family.

The protein resides in the membrane. The sequence is that of H-2 class II histocompatibility antigen, A-D alpha chain (H2-Aa) from Mus musculus (Mouse).